Reading from the N-terminus, the 465-residue chain is A-type ATP synthase subunit B (465 aa).

This sequence belongs to the ATPase alpha/beta chains family. Has multiple subunits with at least A(3), B(3), C, D, E, F, H, I and proteolipid K(x).

It is found in the cell membrane. Component of the A-type ATP synthase that produces ATP from ADP in the presence of a proton gradient across the membrane. The B chain is a regulatory subunit. The protein is A-type ATP synthase subunit B of Thermococcus kodakarensis (strain ATCC BAA-918 / JCM 12380 / KOD1) (Pyrococcus kodakaraensis (strain KOD1)).